The chain runs to 317 residues: Protoheme IX farnesyltransferase (317 aa).

9 helical membrane passes run 29–49 (LILL…QGRV), 53–73 (LLLI…TINC), 102–122 (VFLA…FANL), 123–143 (LSAC…THWL), 151–171 (IVIG…AVTG), 179–199 (VLFG…AMLI), 224–241 (IFLY…LVYP), 245–267 (VSWG…AWQL), and 283–303 (FSIL…LLLP).

It belongs to the UbiA prenyltransferase family. Protoheme IX farnesyltransferase subfamily.

It localises to the cell inner membrane. The catalysed reaction is heme b + (2E,6E)-farnesyl diphosphate + H2O = Fe(II)-heme o + diphosphate. Its pathway is porphyrin-containing compound metabolism; heme O biosynthesis; heme O from protoheme: step 1/1. Functionally, converts heme B (protoheme IX) to heme O by substitution of the vinyl group on carbon 2 of heme B porphyrin ring with a hydroxyethyl farnesyl side group. This is Protoheme IX farnesyltransferase from Thermosynechococcus vestitus (strain NIES-2133 / IAM M-273 / BP-1).